Consider the following 55-residue polypeptide: uncharacterized protein (55 aa).

The next 2 membrane-spanning stretches (helical) occupy residues 5–25 (LISI…MMHM) and 26–46 (LPLY…LYRL).

It is found in the cell membrane. This is an uncharacterized protein from Bacillus subtilis (strain 168).